Consider the following 284-residue polypeptide: Tropomyosin alpha-1 chain (284 aa).

Met1 carries the post-translational modification N-acetylmethionine. The disordered stretch occupies residues 1-38; it reads MDAIKKKMQMLKLDKENALDRAEQAEADKKAAEDRSKQ. Positions 1 to 284 form a coiled coil; it reads MDAIKKKMQM…DHALNDMTSI (284 aa). A compositionally biased stretch (basic and acidic residues) spans 12-38; the sequence is KLDKENALDRAEQAEADKKAAEDRSKQ. Phosphoserine is present on residues Ala31, Ser45, and Lys51. Residues 116–136 form a disordered region; that stretch reads AEKAADESERGMKVIESRAQK. 3 positions are modified to phosphoserine: Ser174, Ser186, and Ser206. Lys213 is subject to N6-acetyllysine. Ser252 is subject to Phosphoserine. Residue Tyr261 is modified to Phosphotyrosine. Ser271 carries the phosphoserine modification. At Ser283 the chain carries Phosphoserine; by DAPK1.

It belongs to the tropomyosin family. As to quaternary structure, homodimer. Heterodimer of an alpha (TPM1, TPM3 or TPM4) and a beta (TPM2) chain. Interacts with HRG (via the HRR domain); the interaction contributes to the antiangiogenic properties of the histidine/proline-rich region (HRR) of HRG. Interacts (via N-terminus) with LMOD2 (via N-terminus) and TMOD1 (via N-terminus). Post-translationally, phosphorylated at Ser-283 by DAPK1 in response to oxidative stress and this phosphorylation enhances stress fiber formation in endothelial cells. In terms of tissue distribution, detected in primary breast cancer tissues but undetectable in normal breast tissues in Sudanese patients. Isoform 1 is expressed in adult and fetal skeletal muscle and cardiac tissues, with higher expression levels in the cardiac tissues. Isoform 10 is expressed in adult and fetal cardiac tissues, but not in skeletal muscle.

Its subcellular location is the cytoplasm. It localises to the cytoskeleton. Functionally, binds to actin filaments in muscle and non-muscle cells. Plays a central role, in association with the troponin complex, in the calcium dependent regulation of vertebrate striated muscle contraction. Smooth muscle contraction is regulated by interaction with caldesmon. In non-muscle cells is implicated in stabilizing cytoskeleton actin filaments. The sequence is that of Tropomyosin alpha-1 chain (TPM1) from Homo sapiens (Human).